The chain runs to 125 residues: Large ribosomal subunit protein bL12 (125 aa).

The protein belongs to the bacterial ribosomal protein bL12 family. As to quaternary structure, homodimer. Part of the ribosomal stalk of the 50S ribosomal subunit. Forms a multimeric L10(L12)X complex, where L10 forms an elongated spine to which 2 to 4 L12 dimers bind in a sequential fashion. Binds GTP-bound translation factors.

Functionally, forms part of the ribosomal stalk which helps the ribosome interact with GTP-bound translation factors. Is thus essential for accurate translation. This is Large ribosomal subunit protein bL12 from Anaeromyxobacter sp. (strain Fw109-5).